Consider the following 264-residue polypeptide: LIMR family protein SELMODRAFT_416716 (264 aa).

4 helical membrane-spanning segments follow: residues 23 to 43 (VVILLTVLCLLLGFLYAVIGY), 96 to 116 (ILFTMFGGVGMATLPLSLIFA), 194 to 214 (IIWLLHIIVFMLVNPPAFPFL), and 225 to 245 (WGLLGTTTFAIFCYYLVMSVI).

The protein belongs to the LIMR family.

It is found in the membrane. In Selaginella moellendorffii (Spikemoss), this protein is LIMR family protein SELMODRAFT_416716.